The sequence spans 309 residues: 5-formyl-3-hydroxy-2-methylpyridine 4-carboxylate 5-dehydrogenase (309 aa).

NAD(+)-binding positions include T12–M13, D32, V87–E89, and K94.

Belongs to the 3-hydroxyacyl-CoA dehydrogenase family. In terms of assembly, homodimer.

It carries out the reaction 5-formyl-3-hydroxy-2-methylpyridine-4-carboxylate + NAD(+) + H2O = 5-hydroxy-6-methylpyridine-3,4-dicarboxylate + NADH + 2 H(+). It catalyses the reaction 5-formyl-3-hydroxy-2-methylpyridine-4-carboxylate + NADH + H(+) = 4-pyridoxate + NAD(+). Its pathway is cofactor degradation; B6 vitamer degradation. Its function is as follows. Involved in the degradation of pyridoxine (vitamin B(6)). Catalyzes the oxidation of 5-formyl-3-hydroxy-2-methylpyridine-4-carboxylate (FHMPC) by NAD(+) to 5-hydroxy-6-methylpyridine-3,4-dicarboxylate (HMPDC). Can also catalyze the reduction of FHMPC by NADH to 4-pyridoxic acid. This chain is 5-formyl-3-hydroxy-2-methylpyridine 4-carboxylate 5-dehydrogenase, found in Mesorhizobium japonicum (strain LMG 29417 / CECT 9101 / MAFF 303099) (Mesorhizobium loti (strain MAFF 303099)).